The following is a 330-amino-acid chain: MISFSSFYKKIADSSLQHWLETLPAILGQWQREHKHGTLPKWEKVLNKLHYPNPDTLELKDSVTIGSGQQLTSGEQQKLENLLRIFQPWRKGPFSVHGINIDTEWRSDWKWERILPHLSPLNNRTVLDVGCGSGYHMWRMLGEGANHVVGIDPSTLFLCQFEAIKRLAGEEQPIHLLPLGIEELPPLDAFDTVFSMGVLYHRRSPIDHLLQLRDQLRTGGELVLETLVIDGDENTVLVPEDRYGKMNNVWFLPSAAALALWLKKADFVDIRCVDIDVTSLAEQRSTDWMPNESLVDYLDPSNIDLTVEGYPAPKRATFIATKNQPNKDLI.

Carboxy-S-adenosyl-L-methionine-binding positions include Lys-91, Trp-105, Lys-110, Gly-130, 152 to 154 (DPS), 181 to 182 (IE), Met-196, Tyr-200, and Arg-315.

Belongs to the class I-like SAM-binding methyltransferase superfamily. CmoB family. In terms of assembly, homotetramer.

It catalyses the reaction carboxy-S-adenosyl-L-methionine + 5-hydroxyuridine(34) in tRNA = 5-carboxymethoxyuridine(34) in tRNA + S-adenosyl-L-homocysteine + H(+). Its function is as follows. Catalyzes carboxymethyl transfer from carboxy-S-adenosyl-L-methionine (Cx-SAM) to 5-hydroxyuridine (ho5U) to form 5-carboxymethoxyuridine (cmo5U) at position 34 in tRNAs. This chain is tRNA U34 carboxymethyltransferase, found in Shewanella woodyi (strain ATCC 51908 / MS32).